A 232-amino-acid chain; its full sequence is Large ribosomal subunit protein uL1 (232 aa).

Belongs to the universal ribosomal protein uL1 family. Part of the 50S ribosomal subunit.

Functionally, binds directly to 23S rRNA. The L1 stalk is quite mobile in the ribosome, and is involved in E site tRNA release. In terms of biological role, protein L1 is also a translational repressor protein, it controls the translation of the L11 operon by binding to its mRNA. The polypeptide is Large ribosomal subunit protein uL1 (Aliarcobacter butzleri (strain RM4018) (Arcobacter butzleri)).